Reading from the N-terminus, the 315-residue chain is ATP synthase gamma chain (315 aa).

Belongs to the ATPase gamma chain family. As to quaternary structure, F-type ATPases have 2 components, CF(1) - the catalytic core - and CF(0) - the membrane proton channel. CF(1) has five subunits: alpha(3), beta(3), gamma(1), delta(1), epsilon(1). CF(0) has three main subunits: a, b and c.

It localises to the cellular thylakoid membrane. Functionally, produces ATP from ADP in the presence of a proton gradient across the membrane. The gamma chain is believed to be important in regulating ATPase activity and the flow of protons through the CF(0) complex. This chain is ATP synthase gamma chain, found in Synechococcus sp. (strain RCC307).